The chain runs to 874 residues: Lon protease (874 aa).

One can recognise a Lon N-terminal domain in the interval 18–261; the sequence is LPVLPLDDAV…RLLTWTKEHL (244 aa). Disordered regions lie at residues 47-68, 120-144, and 298-318; these read VDAA…GISS, GGVR…SGAG, and LSEL…EPAD. Positions 124 to 142 are enriched in low complexity; that stretch reads PAPAGTDTTGTGTADATSG. An ATP-binding site is contributed by 430 to 437; the sequence is GPPGVGKT. In terms of domain architecture, Lon proteolytic spans 667-851; that stretch reads TALPGVATGL…REVLDLALEP (185 aa). Residues Ser-757 and Lys-800 contribute to the active site. The interval 853–874 is disordered; sequence FDADHGGRSPGRAGHSPTALAA.

It belongs to the peptidase S16 family. Homohexamer. Organized in a ring with a central cavity.

The protein localises to the cytoplasm. It catalyses the reaction Hydrolysis of proteins in presence of ATP.. Its function is as follows. ATP-dependent serine protease that mediates the selective degradation of mutant and abnormal proteins as well as certain short-lived regulatory proteins. Required for cellular homeostasis and for survival from DNA damage and developmental changes induced by stress. Degrades polypeptides processively to yield small peptide fragments that are 5 to 10 amino acids long. Binds to DNA in a double-stranded, site-specific manner. In Frankia alni (strain DSM 45986 / CECT 9034 / ACN14a), this protein is Lon protease.